A 466-amino-acid chain; its full sequence is Integrin-linked protein kinase homolog pat-4 (466 aa).

ANK repeat units follow at residues 50–79, 83–112, and 116–145; these read HAFS…RVNS, GDDT…DVNA, and HGMT…AVNV. Residues 210–465 form the Protein kinase domain; it reads LNLITKIAES…QIIPILERMI (256 aa).

It belongs to the protein kinase superfamily. TKL Ser/Thr protein kinase family. Interacts (via protein kinase domain) with unc-112 (via N-terminus). Interacts (via ANK repeats) with unc-97 (via first LIM domain). Interacts (via protein kinase domain) with pat-6 (via C-terminus CH domain). May form a complex with unc-112, unc-97 and pat-6. Does not interact with integrin pat-3. Component of an integrin containing attachment complex, composed of at least pat-2, pat-3, pat-4, pat-6, unc-52, unc-97 and unc-112. In terms of tissue distribution, expressed in body wall muscle.

The protein resides in the cytoplasm. Its subcellular location is the myofibril. It is found in the sarcomere. It localises to the m line. The protein localises to the basal cell membrane. Functionally, probable pseudokinase that acts as an adapter protein. Component of an integrin containing attachment complex, which is required for muscle development and maintenance. Involved in the assembly of dense bodies and M lines during body wall muscle development by recruiting several of their components including integrin pat-3, cpna-1, unc-89 and unc-112 to integrin-mediated attachment sites. Plays a role in distal tip cell (DTC) migration and in oocyte development probably by regulating the actin cytoskeleton. During the formation of neuromuscular junctions at the larval stage, negatively regulates membrane protrusion from body wall muscles. May be involved in thermotolerance and lifespan. The polypeptide is Integrin-linked protein kinase homolog pat-4 (Caenorhabditis elegans).